Consider the following 321-residue polypeptide: Annexin A5 (321 aa).

Annexin repeat units lie at residues 15–86 (FDAR…SLMR), 87–158 (PARI…VLLQ), 170–242 (ALVE…AVVK), and 246–317 (SVPA…LLCG).

It belongs to the annexin family.

In terms of biological role, collagen-binding protein. This chain is Annexin A5 (ANXA5), found in Gallus gallus (Chicken).